Reading from the N-terminus, the 379-residue chain is Protein RecA (379 aa).

79 to 86 serves as a coordination point for ATP; sequence GPESSGKT.

It belongs to the RecA family.

It is found in the cytoplasm. Can catalyze the hydrolysis of ATP in the presence of single-stranded DNA, the ATP-dependent uptake of single-stranded DNA by duplex DNA, and the ATP-dependent hybridization of homologous single-stranded DNAs. It interacts with LexA causing its activation and leading to its autocatalytic cleavage. The sequence is that of Protein RecA from Streptococcus agalactiae.